We begin with the raw amino-acid sequence, 945 residues long: Isoleucine--tRNA ligase 1 (945 aa).

The 'HIGH' region signature appears at 66–76 (PYANGDIHLGH). Position 581 (glutamate 581) interacts with L-isoleucyl-5'-AMP. The short motif at 622 to 626 (KMSKS) is the 'KMSKS' region element. Residue lysine 625 participates in ATP binding. Cysteine 908, cysteine 911, cysteine 928, and cysteine 931 together coordinate Zn(2+).

It belongs to the class-I aminoacyl-tRNA synthetase family. IleS type 1 subfamily. As to quaternary structure, monomer. Zn(2+) serves as cofactor.

Its subcellular location is the cytoplasm. The enzyme catalyses tRNA(Ile) + L-isoleucine + ATP = L-isoleucyl-tRNA(Ile) + AMP + diphosphate. Its function is as follows. Catalyzes the attachment of isoleucine to tRNA(Ile). As IleRS can inadvertently accommodate and process structurally similar amino acids such as valine, to avoid such errors it has two additional distinct tRNA(Ile)-dependent editing activities. One activity is designated as 'pretransfer' editing and involves the hydrolysis of activated Val-AMP. The other activity is designated 'posttransfer' editing and involves deacylation of mischarged Val-tRNA(Ile). This Burkholderia mallei (strain ATCC 23344) protein is Isoleucine--tRNA ligase 1.